Here is a 421-residue protein sequence, read N- to C-terminus: Lipid II:glycine glycyltransferase (421 aa).

Belongs to the FemABX family. In terms of assembly, monomer.

It is found in the cytoplasm. The catalysed reaction is beta-D-GlcNAc-(1-&gt;4)-Mur2Ac(oyl-L-Ala-D-isoglutaminyl-L-Lys-D-Ala-D-Ala)-di-trans,octa-cis-undecaprenyl diphosphate + glycyl-tRNA(Gly) = beta-D-GlcNAc-(1-&gt;4)-Mur2Ac(oyl-L-Ala-D-isoglutaminyl-L-Lys-(N(6)-Gly)-D-Ala-D-Ala)-di-trans,octa-cis-undecaprenyl diphosphate + tRNA(Gly) + H(+). Its function is as follows. Catalyzes the incorporation of the first glycine of the pentaglycine interpeptide bridge, which is characteristic of the S.aureus peptidoglycan. This glycine is added to the epsilon-amino group of the L-lysine of the membrane-bound lipid II intermediate (GlcNAc-(beta-1,4)-N-acetylmuramic acid(-L-Ala-D-iGln-L-Lys-D-Ala-D-Ala)-pyrophosphoryl-undecaprenol), using glycyl-tRNA(Gly) as donor, in a ribosome-independent mechanism. Involved in methicillin resistance. In Staphylococcus aureus (strain COL), this protein is Lipid II:glycine glycyltransferase (femX).